We begin with the raw amino-acid sequence, 1910 residues long: A disintegrin and metalloproteinase with thrombospondin motifs 20 (1910 aa).

A signal peptide spans 1 to 21 (MWVAKWLTGLLYHLSLFITRS). Residues 22–253 (WEVDFHPRQE…DERRHSRKKR (232 aa)) constitute a propeptide that is removed on maturation. Residues N92 and N191 are each glycosylated (N-linked (GlcNAc...) asparagine). The 209-residue stretch at 259–467 (RYIEIMVTAD…GYGECLLDKP (209 aa)) folds into the Peptidase M12B domain. Cystine bridges form between C334–C387, C363–C369, C381–C462, C419–C446, C489–C511, C500–C521, C506–C540, C534–C545, C568–C605, C572–C610, and C583–C595. H403 serves as a coordination point for Zn(2+). Residue E404 is part of the active site. Zn(2+) is bound by residues H407 and H413. N-linked (GlcNAc...) asparagine glycosylation occurs at N445. One can recognise a Disintegrin domain in the interval 468–555 (DEEIYNLPSE…VNKETETRPV (88 aa)). The region spanning 556–611 (NGEWGPWEPYSSCSRTCGGGIESATRRCNRPEPRNGGNYCVGRRMKFRSCNTDSCP) is the TSP type-1 1 domain. Residues N702, N717, N728, N809, and N870 are each glycosylated (N-linked (GlcNAc...) asparagine). A spacer region spans residues 724-846 (TGVFNSSHYG…FNIPLEERSD (123 aa)). TSP type-1 domains are found at residues 846-904 (DMFT…NTDC), 905-961 (ELRW…QELC), 966-1023 (VFTR…FSCP), 1024-1073 (SWAA…SPCE), 1076-1135 (TCAS…TPCS), 1152-1206 (KMAQ…DCFT), 1207-1264 (PCGE…AACP), 1304-1356 (RGNQ…QCGP), 1358-1416 (PCPQ…HACP), 1417-1475 (ADVS…VRCP), 1476-1531 (SWKA…QDCV), 1535-1588 (GMER…NPPC), 1589-1652 (NYIV…INSC), and 1654-1710 (HLAT…NDCK). N1061 carries an N-linked (GlcNAc...) asparagine glycan. N1456 carries an N-linked (GlcNAc...) asparagine glycan. 2 N-linked (GlcNAc...) asparagine glycosylation sites follow: N1542 and N1572. Residues 1711-1910 (SFTTCKEIQV…MTTGLPIQVI (200 aa)) enclose the GON domain. N-linked (GlcNAc...) asparagine glycans are attached at residues N1763, N1781, and N1852.

Zn(2+) is required as a cofactor. Post-translationally, the precursor is cleaved by a furin endopeptidase. Glycosylated. Can be O-fucosylated by POFUT2 on a serine or a threonine residue found within the consensus sequence C1-X(2)-(S/T)-C2-G of the TSP type-1 repeat domains where C1 and C2 are the first and second cysteine residue of the repeat, respectively. Fucosylated repeats can then be further glycosylated by the addition of a beta-1,3-glucose residue by the glucosyltransferase, B3GALTL. Fucosylation mediates the efficient secretion of ADAMTS family members. Can also be C-glycosylated with one or two mannose molecules on tryptophan residues within the consensus sequence W-X-X-W of the TPRs, and N-glycosylated. These other glycosylations can also facilitate secretion. Very sparingly expressed, although is detected at low levels in testis, prostate, ovary, heart, placenta, lung and pancreas. Overexpressed in several brain, colon and breast carcinomas.

The protein localises to the secreted. The protein resides in the extracellular space. It localises to the extracellular matrix. Functionally, may play a role in tissue-remodeling process occurring in both normal and pathological conditions. May have a protease-independent function in the transport from the endoplasmic reticulum to the Golgi apparatus of secretory cargos, mediated by the GON domain. The polypeptide is A disintegrin and metalloproteinase with thrombospondin motifs 20 (ADAMTS20) (Homo sapiens (Human)).